Consider the following 1693-residue polypeptide: uncharacterized protein (1693 aa).

WD repeat units lie at residues 1008–1042, 1053–1083, 1094–1124, 1135–1165, 1176–1206, 1217–1247, 1258–1288, 1299–1329, 1340–1370, 1381–1411, 1422–1452, 1463–1493, 1504–1534, 1545–1575, 1586–1616, and 1627–1657; these read HHEGPVTVLRISPSMENTPPLVLTATTNGIAYLWS, GHQEAITALDWSADGQYFATASADHTVKLWQ, GHEDWVRSVHFSPHHQFLVTSGQDNTARIWN, GHADWVRNAEFNCHGQILLTASRDGTARLWD, GHTSWVRNAQFSPDGQWIVTCSADGTARLWD, GHQNWVNNALWSPDGQHIITSSSDGTARVWS, GHDHNIHGARFSLDGQKIVTYSTDNTARLWT, GHQKEVYDADFSADGRFVFTVSADQTARQWD, GHSHWVRNAHFNPKGDRLLTVSRDKTARLWT, DHQGWVREGQFSPDGQWIVTGSADKTAQLWN, GHQDAVLNVRFSPDSQYIVTASKDGTARVWN, HYEKNIFAAEFSADGQFIVTASDDNTAGIWE, GHEGPVYFAQFSADSRYILTASVDNTARIWD, GHQSIVYQARFSPEGNLIATVSADHTARLWD, GHQGLVGTVDWSPDGQMLVTASNDGTARLWD, and GHGNWVRSAEFSPDGRWVLTSSADGTAKLWP.

This is an uncharacterized protein from Synechocystis sp. (strain ATCC 27184 / PCC 6803 / Kazusa).